The chain runs to 147 residues: MATNTSSNLLTNPYTEREKKLIDEAYYRDLKYNLTSKSRWKFIGDVSETLSQICVGTSSVLAFASGFFEDIDILAFVAGTVGVGSLVLLQFSSYAMKESSERTQQVNVILTKLGLETIPDIVVEPSIIKARLQGELGEQENDVVIEV.

Residues 71 to 91 (IDILAFVAGTVGVGSLVLLQF) form a helical membrane-spanning segment.

It localises to the virion. It is found in the host membrane. This is an uncharacterized protein from Acanthamoeba polyphaga mimivirus (APMV).